Reading from the N-terminus, the 216-residue chain is UPF0502 protein Smal_0052 (216 aa).

The protein belongs to the UPF0502 family.

This Stenotrophomonas maltophilia (strain R551-3) protein is UPF0502 protein Smal_0052.